A 307-amino-acid chain; its full sequence is Putative oxidoreductase YceM (307 aa).

This sequence belongs to the Gfo/Idh/MocA family.

This is Putative oxidoreductase YceM (yceM) from Salmonella typhimurium (strain LT2 / SGSC1412 / ATCC 700720).